The chain runs to 175 residues: Large ribosomal subunit protein uL10 (175 aa).

The protein belongs to the universal ribosomal protein uL10 family. As to quaternary structure, part of the ribosomal stalk of the 50S ribosomal subunit. The N-terminus interacts with L11 and the large rRNA to form the base of the stalk. The C-terminus forms an elongated spine to which L12 dimers bind in a sequential fashion forming a multimeric L10(L12)X complex.

Its function is as follows. Forms part of the ribosomal stalk, playing a central role in the interaction of the ribosome with GTP-bound translation factors. The sequence is that of Large ribosomal subunit protein uL10 from Psychrobacter cryohalolentis (strain ATCC BAA-1226 / DSM 17306 / VKM B-2378 / K5).